We begin with the raw amino-acid sequence, 399 residues long: Phosphoglycerate kinase (399 aa).

Substrate-binding positions include 20–22 (DFN), Arg-35, 58–61 (HLGR), Arg-117, and Arg-154. ATP is bound by residues Lys-204, Gly-295, Glu-326, and 355–358 (GGDS).

Belongs to the phosphoglycerate kinase family. In terms of assembly, monomer.

The protein resides in the cytoplasm. It catalyses the reaction (2R)-3-phosphoglycerate + ATP = (2R)-3-phospho-glyceroyl phosphate + ADP. Its pathway is carbohydrate degradation; glycolysis; pyruvate from D-glyceraldehyde 3-phosphate: step 2/5. The polypeptide is Phosphoglycerate kinase (Beutenbergia cavernae (strain ATCC BAA-8 / DSM 12333 / CCUG 43141 / JCM 11478 / NBRC 16432 / NCIMB 13614 / HKI 0122)).